A 146-amino-acid polypeptide reads, in one-letter code: Snaclec coagulation factor IX/factor X-binding protein subunit B (146 aa).

Residues 1-23 (MGRFIFMSFGFLVVFLSLSGTAA) form the signal peptide. The C-type lectin domain occupies 24–146 (DCPSDWSSYE…MAQFVCEFQA (123 aa)). Cystine bridges form between cysteine 25–cysteine 36, cysteine 53–cysteine 142, and cysteine 119–cysteine 134. Ca(2+)-binding residues include serine 64, glutamine 66, and glutamate 70. Ca(2+) is bound at residue glutamate 143.

This sequence belongs to the snaclec family. In terms of assembly, heterodimer with subunit A of IX/X-bp or IX-bp; disulfide-linked. Expressed by the venom gland.

It localises to the secreted. Functionally, when linked to subunit A of IX/X-bp, anticoagulant protein which binds to the gamma-carboxyglutamic acid-domain regions of factors IX (F9) and factor X (10) in the presence of calcium with a 1 to 1 stoichiometry. When linked to subunit A of IX-bp, anticoagulant protein which binds to the gamma-carboxyglutamic acid-domain regions of factor IX (but not to factor X) in the presence of calcium with a 1 to 1 stoichiometry. The protein is Snaclec coagulation factor IX/factor X-binding protein subunit B of Protobothrops flavoviridis (Habu).